The chain runs to 93 residues: uncharacterized protein (93 aa).

A helical membrane pass occupies residues 12 to 32 (VVGGLSFWTFSAGLIMIVNAL). The tract at residues 47–66 (TANANGSDDDNENKNNSYRS) is disordered.

Its subcellular location is the cell membrane. This is an uncharacterized protein from Mycoplasma genitalium (strain ATCC 33530 / DSM 19775 / NCTC 10195 / G37) (Mycoplasmoides genitalium).